A 431-amino-acid polypeptide reads, in one-letter code: Gamma-glutamyl phosphate reductase (431 aa).

This sequence belongs to the gamma-glutamyl phosphate reductase family.

The protein localises to the cytoplasm. It catalyses the reaction L-glutamate 5-semialdehyde + phosphate + NADP(+) = L-glutamyl 5-phosphate + NADPH + H(+). The protein operates within amino-acid biosynthesis; L-proline biosynthesis; L-glutamate 5-semialdehyde from L-glutamate: step 2/2. Catalyzes the NADPH-dependent reduction of L-glutamate 5-phosphate into L-glutamate 5-semialdehyde and phosphate. The product spontaneously undergoes cyclization to form 1-pyrroline-5-carboxylate. In Trichodesmium erythraeum (strain IMS101), this protein is Gamma-glutamyl phosphate reductase.